We begin with the raw amino-acid sequence, 86 residues long: Large ribosomal subunit protein bL27 (86 aa).

The protein belongs to the bacterial ribosomal protein bL27 family.

The polypeptide is Large ribosomal subunit protein bL27 (Cupriavidus metallidurans (strain ATCC 43123 / DSM 2839 / NBRC 102507 / CH34) (Ralstonia metallidurans)).